The following is a 256-amino-acid chain: Thiazole synthase (256 aa).

K96 acts as the Schiff-base intermediate with DXP in catalysis. 1-deoxy-D-xylulose 5-phosphate contacts are provided by residues G157, 183-184 (AG), and 205-206 (NT).

The protein belongs to the ThiG family. In terms of assembly, homotetramer. Forms heterodimers with either ThiH or ThiS.

It localises to the cytoplasm. It catalyses the reaction [ThiS sulfur-carrier protein]-C-terminal-Gly-aminoethanethioate + 2-iminoacetate + 1-deoxy-D-xylulose 5-phosphate = [ThiS sulfur-carrier protein]-C-terminal Gly-Gly + 2-[(2R,5Z)-2-carboxy-4-methylthiazol-5(2H)-ylidene]ethyl phosphate + 2 H2O + H(+). It functions in the pathway cofactor biosynthesis; thiamine diphosphate biosynthesis. Functionally, catalyzes the rearrangement of 1-deoxy-D-xylulose 5-phosphate (DXP) to produce the thiazole phosphate moiety of thiamine. Sulfur is provided by the thiocarboxylate moiety of the carrier protein ThiS. In vitro, sulfur can be provided by H(2)S. This is Thiazole synthase from Bacillus cereus (strain 03BB102).